A 215-amino-acid polypeptide reads, in one-letter code: MATPGFPSTEQRLGLYPVVDSLLWIERLLAAGVTTLQLRIKNADDAQVEQDIVAAIELGKRYQARLFINDYWQLAVKHGAYGVHLGQEDLETADLAAIQQAGLRLGISTHDEHELAVAKTLRPSYIALGHIFPTQTKQMPSSPQGLASLSRQVKNTPDYPTVAIGGISIERVPHVLATGVGSVAVVSAITLASDWQRATAQLLHLIEGKELADEK.

4-amino-2-methyl-5-(diphosphooxymethyl)pyrimidine-binding positions include 37–41 (QLRIK) and Asn-69. Mg(2+)-binding residues include Asp-70 and Asp-89. 4-amino-2-methyl-5-(diphosphooxymethyl)pyrimidine is bound at residue Ser-108. 134–136 (TQT) lines the 2-[(2R,5Z)-2-carboxy-4-methylthiazol-5(2H)-ylidene]ethyl phosphate pocket. Lys-137 lines the 4-amino-2-methyl-5-(diphosphooxymethyl)pyrimidine pocket. Residues Gly-166 and 186-187 (VS) each bind 2-[(2R,5Z)-2-carboxy-4-methylthiazol-5(2H)-ylidene]ethyl phosphate.

The protein belongs to the thiamine-phosphate synthase family. Requires Mg(2+) as cofactor.

The catalysed reaction is 2-[(2R,5Z)-2-carboxy-4-methylthiazol-5(2H)-ylidene]ethyl phosphate + 4-amino-2-methyl-5-(diphosphooxymethyl)pyrimidine + 2 H(+) = thiamine phosphate + CO2 + diphosphate. It catalyses the reaction 2-(2-carboxy-4-methylthiazol-5-yl)ethyl phosphate + 4-amino-2-methyl-5-(diphosphooxymethyl)pyrimidine + 2 H(+) = thiamine phosphate + CO2 + diphosphate. The enzyme catalyses 4-methyl-5-(2-phosphooxyethyl)-thiazole + 4-amino-2-methyl-5-(diphosphooxymethyl)pyrimidine + H(+) = thiamine phosphate + diphosphate. It participates in cofactor biosynthesis; thiamine diphosphate biosynthesis; thiamine phosphate from 4-amino-2-methyl-5-diphosphomethylpyrimidine and 4-methyl-5-(2-phosphoethyl)-thiazole: step 1/1. Functionally, condenses 4-methyl-5-(beta-hydroxyethyl)thiazole monophosphate (THZ-P) and 2-methyl-4-amino-5-hydroxymethyl pyrimidine pyrophosphate (HMP-PP) to form thiamine monophosphate (TMP). This Yersinia pseudotuberculosis serotype I (strain IP32953) protein is Thiamine-phosphate synthase.